We begin with the raw amino-acid sequence, 188 residues long: Type II secretion system protein H (188 aa).

Residues 1 to 10 (MKRSTRKQQG) constitute a propeptide, leader sequence. F11 carries the post-translational modification N-methylphenylalanine. Residues 13 to 35 (LLEMMLVVLLAGIAAGMVVMAFP) form a helical membrane-spanning segment.

It belongs to the GSP H family. In terms of assembly, type II secretion is composed of four main components: the outer membrane complex, the inner membrane complex, the cytoplasmic secretion ATPase and the periplasm-spanning pseudopilus. Interacts with core component OutG. Cleaved by prepilin peptidase. Post-translationally, methylated by prepilin peptidase at the amino group of the N-terminal phenylalanine once the leader sequence is cleaved by prepilin peptidase.

Its subcellular location is the cell inner membrane. Component of the type II secretion system required for the energy-dependent secretion of extracellular factors such as proteases and toxins from the periplasm. Part of the pseudopilus tip complex that is critical for the recognition and binding of secretion substrates. In Pectobacterium carotovorum subsp. carotovorum (Erwinia carotovora subsp. carotovora), this protein is Type II secretion system protein H (outH).